A 505-amino-acid chain; its full sequence is Bifunctional pantoate ligase/cytidylate kinase (505 aa).

Residues 1-268 form a pantoate--beta-alanine ligase region; the sequence is MHQWRKHQQS…CGETRLIDHT (268 aa). ATP is bound at residue 18 to 25; that stretch reads MGALHRGH. His-25 (proton donor) is an active-site residue. Gln-53 provides a ligand contact to (R)-pantoate. Gln-53 is a binding site for beta-alanine. An ATP-binding site is contributed by 142–145; it reads GEKD. Residue Gln-148 coordinates (R)-pantoate. ATP-binding positions include Val-171 and 179–182; that span reads CSSR. The segment at 269–505 is cytidylate kinase; that stretch reads FLMSRQPIVA…PEEVWPTAGR (237 aa).

The protein in the N-terminal section; belongs to the pantothenate synthetase family. In the C-terminal section; belongs to the cytidylate kinase family. Type 1 subfamily.

Its subcellular location is the cytoplasm. It catalyses the reaction (R)-pantoate + beta-alanine + ATP = (R)-pantothenate + AMP + diphosphate + H(+). It carries out the reaction CMP + ATP = CDP + ADP. The catalysed reaction is dCMP + ATP = dCDP + ADP. It functions in the pathway cofactor biosynthesis; (R)-pantothenate biosynthesis; (R)-pantothenate from (R)-pantoate and beta-alanine: step 1/1. Functionally, catalyzes the condensation of pantoate with beta-alanine in an ATP-dependent reaction via a pantoyl-adenylate intermediate. Its function is as follows. Catalyzes the transfer of a phosphate group from ATP to either CMP or dCMP to form CDP or dCDP and ADP, respectively. This chain is Bifunctional pantoate ligase/cytidylate kinase, found in Prochlorococcus marinus (strain MIT 9313).